Here is a 403-residue protein sequence, read N- to C-terminus: Serine/threonine transporter SstT (403 aa).

The next 8 helical transmembrane spans lie at 11 to 31 (GNLV…AFIS), 51 to 71 (AIAP…KEVG), 81 to 101 (VMYV…SFIF), 138 to 158 (ALAN…GIPL), 175 to 195 (AVSY…FGLV), 213 to 233 (LLGV…PILV), 285 to 305 (VAIP…VTVL), and 319 to 339 (FMTA…ASGV).

This sequence belongs to the dicarboxylate/amino acid:cation symporter (DAACS) (TC 2.A.23) family.

Its subcellular location is the cell inner membrane. It catalyses the reaction L-serine(in) + Na(+)(in) = L-serine(out) + Na(+)(out). The enzyme catalyses L-threonine(in) + Na(+)(in) = L-threonine(out) + Na(+)(out). Its function is as follows. Involved in the import of serine and threonine into the cell, with the concomitant import of sodium (symport system). The polypeptide is Serine/threonine transporter SstT (Haemophilus ducreyi (strain 35000HP / ATCC 700724)).